We begin with the raw amino-acid sequence, 489 residues long: Putative general negative regulator of transcription C16C9.04c (489 aa).

The RING-type zinc finger occupies Cys18–Arg61. Residues Ala76–Asn109 adopt a coiled-coil conformation. The 83-residue stretch at Asn116–Ser198 folds into the RRM domain. The C3H1-type zinc-finger motif lies at Tyr199–Gly226. 2 stretches are compositionally biased toward polar residues: residues Leu246–Ser261 and Glu466–Asn479. Disordered regions lie at residues Leu246–Thr268 and Val458–Ser489.

The protein localises to the nucleus. Functionally, may negatively regulate the basal and activated transcription of many genes. The polypeptide is Putative general negative regulator of transcription C16C9.04c (Schizosaccharomyces pombe (strain 972 / ATCC 24843) (Fission yeast)).